Here is a 1620-residue protein sequence, read N- to C-terminus: ABC-type organic anion transporter ABCA8B (1620 aa).

Helical transmembrane passes span S30–G50, F223–V243, S267–I287, F298–L318, S326–T346, L352–M372, and L396–M416. The 236-residue stretch at I479–Q714 folds into the ABC transporter 1 domain. G515–S522 contributes to the ATP binding site. An N-linked (GlcNAc...) asparagine glycan is attached at N723. 8 helical membrane-spanning segments follow: residues T860–I880, C979–A999, T1023–T1043, M1069–F1089, I1105–I1125, I1135–F1155, I1164–F1184, and V1194–T1214. Residues L1283–K1516 form the ABC transporter 2 domain. Residue G1321 to S1328 coordinates ATP.

It belongs to the ABC transporter superfamily. ABCA family. In terms of tissue distribution, expressed in heart, brain, lung, liver and skeletal muscle. Highly expressed in the liver, and is also abundant in heart and skeletal muscle. Highly expressed in liver.

The protein localises to the cell membrane. The protein resides in the basolateral cell membrane. The enzyme catalyses taurocholate(in) + ATP + H2O = taurocholate(out) + ADP + phosphate + H(+). It catalyses the reaction cholesterol(in) + ATP + H2O = cholesterol(out) + ADP + phosphate + H(+). With respect to regulation, cholesterol efflux is increased by extracellularly applied taurocholate. In terms of biological role, mediates cholesterol and taurocholate efflux. Through the interaction with ABCA1 potentiates the cholesterol efflux to lipid-free APOA1, in turn regulates high-density lipoprotein cholesterol levels. In Mus musculus (Mouse), this protein is ABC-type organic anion transporter ABCA8B.